We begin with the raw amino-acid sequence, 307 residues long: Ribonuclease Z (307 aa).

Zn(2+) contacts are provided by histidine 63, histidine 65, aspartate 67, histidine 68, histidine 140, aspartate 211, and histidine 269. Catalysis depends on aspartate 67, which acts as the Proton acceptor.

Belongs to the RNase Z family. In terms of assembly, homodimer. The cofactor is Zn(2+).

The catalysed reaction is Endonucleolytic cleavage of RNA, removing extra 3' nucleotides from tRNA precursor, generating 3' termini of tRNAs. A 3'-hydroxy group is left at the tRNA terminus and a 5'-phosphoryl group is left at the trailer molecule.. In terms of biological role, zinc phosphodiesterase, which displays some tRNA 3'-processing endonuclease activity. Probably involved in tRNA maturation, by removing a 3'-trailer from precursor tRNA. This is Ribonuclease Z from Bacillus licheniformis (strain ATCC 14580 / DSM 13 / JCM 2505 / CCUG 7422 / NBRC 12200 / NCIMB 9375 / NCTC 10341 / NRRL NRS-1264 / Gibson 46).